Here is a 981-residue protein sequence, read N- to C-terminus: Translation initiation factor IF-2 (981 aa).

A disordered region spans residues 31–370 (FVKSASSTVE…SKRAKRAEYE (340 aa)). A compositionally biased stretch (low complexity) spans 64–87 (GAAAPAARPAAKPGAPSPSAAKPG). Over residues 88-111 (GPRPGPKPAAPAPAAPAAPAPAAP) the composition is skewed to pro residues. Positions 112-121 (AAPAAAAPAA) are enriched in low complexity. The segment covering 136–145 (PAQPARPAPA) has biased composition (pro residues). Residues 146 to 165 (APAASAPAAPAAPAAPSTGA) are compositionally biased toward low complexity. Residues 256–269 (RPSPGSMPPRPNPG) are compositionally biased toward pro residues. Over residues 270 to 279 (AMPARSARPA) the composition is skewed to low complexity. The segment covering 280 to 339 (PGGGGRPGRPGGAPGGRPGGGGGGYRGGGAPGAGAGAGAPGGAAPAGGFRGRPGGGGRPG) has biased composition (gly residues). The span at 356-365 (RRGRKSKRAK) shows a compositional bias: basic residues. Residues 477–649 (SRPPVVTVMG…VLLTADASLD (173 aa)) form the tr-type G domain. Residues 486–493 (GHVDHGKT) form a G1 region. 486–493 (GHVDHGKT) is a binding site for GTP. The segment at 511–515 (GITQH) is G2. Positions 536–539 (DTPG) are G3. GTP is bound by residues 536-540 (DTPGH) and 590-593 (NKID). A G4 region spans residues 590-593 (NKID). The interval 626–628 (SAK) is G5.

It belongs to the TRAFAC class translation factor GTPase superfamily. Classic translation factor GTPase family. IF-2 subfamily.

The protein resides in the cytoplasm. Its function is as follows. One of the essential components for the initiation of protein synthesis. Protects formylmethionyl-tRNA from spontaneous hydrolysis and promotes its binding to the 30S ribosomal subunits. Also involved in the hydrolysis of GTP during the formation of the 70S ribosomal complex. In Rhodococcus erythropolis (strain PR4 / NBRC 100887), this protein is Translation initiation factor IF-2.